Here is a 301-residue protein sequence, read N- to C-terminus: 33 kDa chaperonin (301 aa).

Disulfide bonds link Cys244–Cys246 and Cys277–Cys280.

It belongs to the HSP33 family. Post-translationally, under oxidizing conditions two disulfide bonds are formed involving the reactive cysteines. Under reducing conditions zinc is bound to the reactive cysteines and the protein is inactive.

Its subcellular location is the cytoplasm. In terms of biological role, redox regulated molecular chaperone. Protects both thermally unfolding and oxidatively damaged proteins from irreversible aggregation. Plays an important role in the bacterial defense system toward oxidative stress. This Geobacter sulfurreducens (strain ATCC 51573 / DSM 12127 / PCA) protein is 33 kDa chaperonin.